We begin with the raw amino-acid sequence, 298 residues long: Tyrosine recombinase XerC (298 aa).

The region spanning 1–84 (MNHIQDAFLN…TLRTFYEYWM (84 aa)) is the Core-binding (CB) domain. One can recognise a Tyr recombinase domain in the interval 105–286 (YLPQFFYEEE…SNQQLRKVYL (182 aa)). Catalysis depends on residues Arg145, Lys169, His238, Arg241, and His264. Tyr273 (O-(3'-phospho-DNA)-tyrosine intermediate) is an active-site residue.

It belongs to the 'phage' integrase family. XerC subfamily. Forms a cyclic heterotetrameric complex composed of two molecules of XerC and two molecules of XerD.

The protein resides in the cytoplasm. In terms of biological role, site-specific tyrosine recombinase, which acts by catalyzing the cutting and rejoining of the recombining DNA molecules. The XerC-XerD complex is essential to convert dimers of the bacterial chromosome into monomers to permit their segregation at cell division. It also contributes to the segregational stability of plasmids. The polypeptide is Tyrosine recombinase XerC (Staphylococcus aureus (strain USA300)).